The chain runs to 178 residues: uncharacterized protein (178 aa).

The interval 64 to 103 is disordered; it reads GVSDNTNKTTAKDNVSDKSSENEVAQPKQVTPPVDATGNT. Residues 73-84 are compositionally biased toward basic and acidic residues; sequence TAKDNVSDKSSE.

This is an uncharacterized protein from Acidianus sp. F28 (AFV-2).